Consider the following 176-residue polypeptide: Tubulin polymerization-promoting protein family member 3 (176 aa).

A2 is modified (N-acetylalanine).

It belongs to the TPPP family.

It is found in the cytoplasm. The protein resides in the cytoskeleton. Functionally, regulator of microtubule dynamic that has microtubule bundling activity. Required for embryo implantation; possibly by regulating beta-catenin. Also required for decidualization via regulation of beta-catenin. The polypeptide is Tubulin polymerization-promoting protein family member 3 (TPPP3) (Bos taurus (Bovine)).